The following is a 316-amino-acid chain: Olfactory receptor 2H1 (316 aa).

Topologically, residues 1 to 23 (MVNQSSPMGFLLLGFSEHPALER) are extracellular. A glycan (N-linked (GlcNAc...) asparagine) is linked at asparagine 3. The chain crosses the membrane as a helical span at residues 24–47 (TLFVVVFTSYLLTLVGNTLIILLS). Topologically, residues 48–55 (VLYPRLHS) are cytoplasmic. A helical membrane pass occupies residues 56 to 77 (PMYFFLSDLSFLDLCFTTSCVP). Residues 78 to 98 (QMLVNLWGPKKTISFLGCSVQ) are Extracellular-facing. Cysteines 95 and 187 form a disulfide. The chain crosses the membrane as a helical span at residues 99–118 (LFIFLSLGTTECILLTVMAF). Over 119–137 (DRYVAVCQPLHYATIIHPR) the chain is Cytoplasmic. A helical membrane pass occupies residues 138-156 (LCWQLASVAWVMSLVQSIV). At 157–193 (QTPSTLHLPFCPHQQIDDFLCEVPSLIRLSCGDTSYN) the chain is on the extracellular side. The helical transmembrane segment at 194-217 (EIQLAVSSVIFVVVPLSLILASYG) threads the bilayer. Residues 218–234 (ATAQAVLRINSATAWRK) lie on the Cytoplasmic side of the membrane. The chain crosses the membrane as a helical span at residues 235–257 (AFGTCSSHLTVVTLFYSSVIAVY). Topologically, residues 258–270 (LQPKNPYAQGRGK) are extracellular. A helical transmembrane segment spans residues 271–290 (FFGLFYAVGTPSLNPLVYTL). Residues 291 to 316 (RNKEIKRALRRLLGKERDSRESWRAA) lie on the Cytoplasmic side of the membrane.

This sequence belongs to the G-protein coupled receptor 1 family.

It is found in the cell membrane. Its function is as follows. Odorant receptor. The sequence is that of Olfactory receptor 2H1 (OR2H1) from Homo sapiens (Human).